We begin with the raw amino-acid sequence, 491 residues long: 2,3-bisphosphoglycerate-independent phosphoglycerate mutase (491 aa).

Residues aspartate 11 and serine 61 each coordinate Mn(2+). Residue serine 61 is the Phosphoserine intermediate of the active site. Substrate-binding positions include histidine 118, 147 to 148 (RD), arginine 177, arginine 183, 248 to 251 (RSDR), and lysine 320. Positions 386, 390, 427, 428, and 445 each coordinate Mn(2+).

The protein belongs to the BPG-independent phosphoglycerate mutase family. Monomer. Requires Mn(2+) as cofactor.

It catalyses the reaction (2R)-2-phosphoglycerate = (2R)-3-phosphoglycerate. Its pathway is carbohydrate degradation; glycolysis; pyruvate from D-glyceraldehyde 3-phosphate: step 3/5. In terms of biological role, catalyzes the interconversion of 2-phosphoglycerate and 3-phosphoglycerate. This Aliarcobacter butzleri (strain RM4018) (Arcobacter butzleri) protein is 2,3-bisphosphoglycerate-independent phosphoglycerate mutase.